A 200-amino-acid polypeptide reads, in one-letter code: Molybdenum cofactor guanylyltransferase (200 aa).

GTP-binding positions include Leu10–Gly12, Lys23, Asn51, Asp69, and Asp99. Asp99 provides a ligand contact to Mg(2+).

The protein belongs to the MobA family. In terms of assembly, monomer. Requires Mg(2+) as cofactor.

The protein resides in the cytoplasm. The enzyme catalyses Mo-molybdopterin + GTP + H(+) = Mo-molybdopterin guanine dinucleotide + diphosphate. In terms of biological role, transfers a GMP moiety from GTP to Mo-molybdopterin (Mo-MPT) cofactor (Moco or molybdenum cofactor) to form Mo-molybdopterin guanine dinucleotide (Mo-MGD) cofactor. This chain is Molybdenum cofactor guanylyltransferase, found in Shewanella halifaxensis (strain HAW-EB4).